Here is a 580-residue protein sequence, read N- to C-terminus: Laccase-6 (580 aa).

Positions 1–22 (MSCSWMIPVFAILAFVASAAQA) are cleaved as a signal peptide. 2 consecutive Plastocyanin-like domains span residues 30–148 (NVAT…PRRA) and 158–317 (EEKT…YVDA). Asn-44 and Asn-78 each carry an N-linked (GlcNAc...) asparagine glycan. 4 residues coordinate Cu cation: His-82, His-84, His-127, and His-129. Residues Asn-306, Asn-335, Asn-385, Asn-397, and Asn-462 are each glycosylated (N-linked (GlcNAc...) asparagine). Residues 424–564 (DFPDQPPVAF…AMVFEVESGP (141 aa)) enclose the Plastocyanin-like 3 domain. Cu cation-binding residues include His-480, His-483, His-485, His-543, Cys-544, His-545, and His-549.

This sequence belongs to the multicopper oxidase family. Cu cation is required as a cofactor.

The protein resides in the secreted. It localises to the extracellular space. The protein localises to the apoplast. It catalyses the reaction 4 hydroquinone + O2 = 4 benzosemiquinone + 2 H2O. Lignin degradation and detoxification of lignin-derived products. The chain is Laccase-6 (LAC6) from Oryza sativa subsp. japonica (Rice).